The chain runs to 529 residues: Lysine--tRNA ligase (529 aa).

The short motif at Pro44 to Thr52 is the 'HIGH' region element. Positions Lys290 to Ser294 match the 'KMSKS' region motif. ATP is bound at residue Lys293.

Belongs to the class-I aminoacyl-tRNA synthetase family.

It is found in the cytoplasm. The catalysed reaction is tRNA(Lys) + L-lysine + ATP = L-lysyl-tRNA(Lys) + AMP + diphosphate. The polypeptide is Lysine--tRNA ligase (Rickettsia akari (strain Hartford)).